A 312-amino-acid polypeptide reads, in one-letter code: HPr kinase/phosphorylase (312 aa).

Residues His139 and Lys160 contribute to the active site. Position 154–161 (154–161 (GDSGIGKS)) interacts with ATP. Residue Ser161 coordinates Mg(2+). Asp178 (proton acceptor; for phosphorylation activity. Proton donor; for dephosphorylation activity) is an active-site residue. The interval 202-211 (IEIRGVGIID) is important for the catalytic mechanism of both phosphorylation and dephosphorylation. A Mg(2+)-binding site is contributed by Glu203. Residue Arg244 is part of the active site. The segment at 265-270 (PVKTGR) is important for the catalytic mechanism of dephosphorylation.

This sequence belongs to the HPrK/P family. Homohexamer. The cofactor is Mg(2+).

The enzyme catalyses [HPr protein]-L-serine + ATP = [HPr protein]-O-phospho-L-serine + ADP + H(+). It catalyses the reaction [HPr protein]-O-phospho-L-serine + phosphate + H(+) = [HPr protein]-L-serine + diphosphate. Its function is as follows. Catalyzes the ATP- as well as the pyrophosphate-dependent phosphorylation of a specific serine residue in HPr, a phosphocarrier protein of the phosphoenolpyruvate-dependent sugar phosphotransferase system (PTS). HprK/P also catalyzes the pyrophosphate-producing, inorganic phosphate-dependent dephosphorylation (phosphorolysis) of seryl-phosphorylated HPr (P-Ser-HPr). The two antagonistic activities of HprK/P are regulated by several intracellular metabolites, which change their concentration in response to the absence or presence of rapidly metabolisable carbon sources (glucose, fructose, etc.) in the growth medium. Therefore, by controlling the phosphorylation state of HPr, HPrK/P is a sensor enzyme that plays a major role in the regulation of carbon metabolism and sugar transport: it mediates carbon catabolite repression (CCR), and regulates PTS-catalyzed carbohydrate uptake and inducer exclusion. The polypeptide is HPr kinase/phosphorylase (Streptococcus pneumoniae (strain ATCC BAA-255 / R6)).